A 128-amino-acid polypeptide reads, in one-letter code: Ribosome-binding factor A (128 aa).

It belongs to the RbfA family. Monomer. Binds 30S ribosomal subunits, but not 50S ribosomal subunits or 70S ribosomes.

The protein localises to the cytoplasm. One of several proteins that assist in the late maturation steps of the functional core of the 30S ribosomal subunit. Associates with free 30S ribosomal subunits (but not with 30S subunits that are part of 70S ribosomes or polysomes). Required for efficient processing of 16S rRNA. May interact with the 5'-terminal helix region of 16S rRNA. The polypeptide is Ribosome-binding factor A (Rippkaea orientalis (strain PCC 8801 / RF-1) (Cyanothece sp. (strain PCC 8801))).